A 1380-amino-acid polypeptide reads, in one-letter code: DNA-directed RNA polymerase subunit beta (1380 aa).

It belongs to the RNA polymerase beta chain family. The RNAP catalytic core consists of 2 alpha, 1 beta, 1 beta' and 1 omega subunit. When a sigma factor is associated with the core the holoenzyme is formed, which can initiate transcription.

It catalyses the reaction RNA(n) + a ribonucleoside 5'-triphosphate = RNA(n+1) + diphosphate. DNA-dependent RNA polymerase catalyzes the transcription of DNA into RNA using the four ribonucleoside triphosphates as substrates. The polypeptide is DNA-directed RNA polymerase subunit beta (Alcanivorax borkumensis (strain ATCC 700651 / DSM 11573 / NCIMB 13689 / SK2)).